A 277-amino-acid polypeptide reads, in one-letter code: 3-methyl-2-oxobutanoate hydroxymethyltransferase (277 aa).

Positions 54 and 93 each coordinate Mg(2+). 3-methyl-2-oxobutanoate contacts are provided by residues 54–55 (DS), aspartate 93, and lysine 122. Glutamate 124 is a Mg(2+) binding site. The active-site Proton acceptor is glutamate 191.

This sequence belongs to the PanB family. Homodecamer; pentamer of dimers. It depends on Mg(2+) as a cofactor.

The protein resides in the cytoplasm. It carries out the reaction 3-methyl-2-oxobutanoate + (6R)-5,10-methylene-5,6,7,8-tetrahydrofolate + H2O = 2-dehydropantoate + (6S)-5,6,7,8-tetrahydrofolate. It functions in the pathway cofactor biosynthesis; (R)-pantothenate biosynthesis; (R)-pantoate from 3-methyl-2-oxobutanoate: step 1/2. In terms of biological role, catalyzes the reversible reaction in which hydroxymethyl group from 5,10-methylenetetrahydrofolate is transferred onto alpha-ketoisovalerate to form ketopantoate. The sequence is that of 3-methyl-2-oxobutanoate hydroxymethyltransferase from Alkalilimnicola ehrlichii (strain ATCC BAA-1101 / DSM 17681 / MLHE-1).